The primary structure comprises 140 residues: Holo-[acyl-carrier-protein] synthase (140 aa).

Mg(2+) contacts are provided by Asp-8 and Glu-57.

It belongs to the P-Pant transferase superfamily. AcpS family. Requires Mg(2+) as cofactor.

The protein resides in the cytoplasm. It catalyses the reaction apo-[ACP] + CoA = holo-[ACP] + adenosine 3',5'-bisphosphate + H(+). Its function is as follows. Transfers the 4'-phosphopantetheine moiety from coenzyme A to a Ser of acyl-carrier-protein. This is Holo-[acyl-carrier-protein] synthase from Beijerinckia indica subsp. indica (strain ATCC 9039 / DSM 1715 / NCIMB 8712).